The following is a 211-amino-acid chain: Flagellar calcium-binding protein (211 aa).

The interval 1 to 29 (MGACGSKGSTSDKGLASDKDGKKAKDRKE) is disordered. Basic and acidic residues predominate over residues 15-29 (LASDKDGKKAKDRKE). 4 EF-hand domains span residues 45–80 (EAKQ…VLKL), 81–116 (DEFT…FVEF), 127–162 (YDFF…LEAW), and 164–199 (AKVE…VKLD). Ca(2+)-binding residues include Asp58, Asn60, Thr62, Lys64, and Glu69. Asp140, Ser142, Asn144, Glu151, Asp177, Asn179, Thr181, Ser183, and Glu188 together coordinate Ca(2+).

Belongs to the calflagin family.

Its subcellular location is the cell projection. It is found in the cilium. The protein resides in the flagellum. In terms of biological role, may contribute to the rapid motility of the trypanosomes, playing a role either in flagellar structure or in calcium metabolism. Could alternate between a GDP-bound inactive form to a calcium/GTP-bound active form. The sequence is that of Flagellar calcium-binding protein (FCABP) from Trypanosoma cruzi.